The chain runs to 417 residues: Ribonucleoside-diphosphate reductase small chain (417 aa).

Fe cation contacts are provided by Asp168, Glu199, and His202. The active site involves Tyr206. Residues Glu261, Glu297, and His300 each coordinate Fe cation.

Belongs to the ribonucleoside diphosphate reductase small chain family. Heterotetramer composed of a homodimer of the large subunit (R1) and a homodimer of the small subunit (R2). Larger multisubunit protein complex are also active, composed of (R1)n(R2)n. The cofactor is Fe cation.

It catalyses the reaction a 2'-deoxyribonucleoside 5'-diphosphate + [thioredoxin]-disulfide + H2O = a ribonucleoside 5'-diphosphate + [thioredoxin]-dithiol. Functionally, ribonucleoside-diphosphate reductase holoenzyme provides the precursors necessary for viral DNA synthesis. Allows virus growth in non-dividing cells. Catalyzes the biosynthesis of deoxyribonucleotides from the corresponding ribonucleotides. The protein is Ribonucleoside-diphosphate reductase small chain (RNR2) of Acanthamoeba polyphaga mimivirus (APMV).